Consider the following 208-residue polypeptide: uncharacterized protein (208 aa).

This is an uncharacterized protein from Acidianus sp. F28 (AFV-2).